Consider the following 85-residue polypeptide: Large ribosomal subunit protein bL27 (85 aa).

It belongs to the bacterial ribosomal protein bL27 family.

In Solibacter usitatus (strain Ellin6076), this protein is Large ribosomal subunit protein bL27.